Consider the following 400-residue polypeptide: Probable peptidoglycan glycosyltransferase FtsW (400 aa).

The Cytoplasmic segment spans residues 1-24; that stretch reads MSTGSLPLGLPSRDSLDGLRNSVD. The chain crosses the membrane as a helical span at residues 25-45; the sequence is LPLLAAAALLLGLGLIMVASA. Residues 46 to 63 lie on the Periplasmic side of the membrane; the sequence is SMDLGERYYGNTWHFFQR. Residues 64–84 traverse the membrane as a helical segment; that stretch reads QVLFAAIGLALATVMWAIPLE. Residues 85–88 lie on the Cytoplasmic side of the membrane; sequence RWER. The chain crosses the membrane as a helical span at residues 89 to 109; that stretch reads AGPWLLILVMVLLIAVLLPGV. The Periplasmic segment spans residues 110-118; that stretch reads GRTVNGATR. The helical transmembrane segment at 119 to 139 threads the bilayer; it reads WIPIGMFNLQVAEPVKLLVVM. The Cytoplasmic segment spans residues 140 to 153; sequence YLAGYIVRHYSALR. Residues 154 to 174 traverse the membrane as a helical segment; sequence LHLRGFVRPLVVLGFGTVLLL. Over 175-177 the chain is Periplasmic; it reads LQP. A helical membrane pass occupies residues 178-198; that stretch reads DFGGAAIMLAIGMGMLFLAGA. Residue K199 is a topological domain, cytoplasmic. A helical membrane pass occupies residues 200–220; it reads LWQFAALGATIAVGMAFVAVA. Topologically, residues 221 to 278 are periplasmic; that stretch reads APYRVARLTAFLDPWQDPFATGFQLTQSLIAIGSGGWFGTGLGNSVQKLFYLPEAHND. A helical transmembrane segment spans residues 279 to 299; it reads FLFAVFAEEFGFIGVLALIAL. Residues 300 to 324 lie on the Cytoplasmic side of the membrane; sequence FAVVVWRCVKIGLWAERAGHAFGSH. A helical transmembrane segment spans residues 325-345; it reads LAFGVAIWLALQSALNLAVNM. Residues 346 to 354 lie on the Periplasmic side of the membrane; the sequence is GLLPTKGMT. Residues 355 to 375 form a helical membrane-spanning segment; sequence LPFLSYGGSSLIVTLMAIGLV. Residues 376-400 lie on the Cytoplasmic side of the membrane; the sequence is MRVYREAQIPAPRQSTPPRRKRGQA.

The protein belongs to the SEDS family. FtsW subfamily.

It localises to the cell inner membrane. It carries out the reaction [GlcNAc-(1-&gt;4)-Mur2Ac(oyl-L-Ala-gamma-D-Glu-L-Lys-D-Ala-D-Ala)](n)-di-trans,octa-cis-undecaprenyl diphosphate + beta-D-GlcNAc-(1-&gt;4)-Mur2Ac(oyl-L-Ala-gamma-D-Glu-L-Lys-D-Ala-D-Ala)-di-trans,octa-cis-undecaprenyl diphosphate = [GlcNAc-(1-&gt;4)-Mur2Ac(oyl-L-Ala-gamma-D-Glu-L-Lys-D-Ala-D-Ala)](n+1)-di-trans,octa-cis-undecaprenyl diphosphate + di-trans,octa-cis-undecaprenyl diphosphate + H(+). It participates in cell wall biogenesis; peptidoglycan biosynthesis. Its function is as follows. Peptidoglycan polymerase that is essential for cell division. This is Probable peptidoglycan glycosyltransferase FtsW from Thioalkalivibrio sp. (strain K90mix).